Here is a 223-residue protein sequence, read N- to C-terminus: Small heat shock protein hspI, mitochondrial (223 aa).

Residues Met1 to Gly23 constitute a mitochondrion transit peptide. A sHSP domain is found at Lys109–Gln223.

It belongs to the small heat shock protein (HSP20) family.

It is found in the mitochondrion. This chain is Small heat shock protein hspI, mitochondrial (hspI), found in Dictyostelium discoideum (Social amoeba).